Consider the following 203-residue polypeptide: MGRMDYLAMKTDDVDTVALVNSDMEELKVAAKKLFSDVSKLGGLGFGVSFLKFLASFAAIYLLILDRTNWKTKMLTSLLIPYIFLSLPSVIFNFLSGDVGKWIAFVAVVLRLFFPKHFPDWLEMPGSLILLLVVSPHFLAHHIRGTWIGTVISLFIGCYLLQEHIRASGGFRNSFTQPRGVSNTLGIILLLVYPVWALIVRVM.

The Extracellular portion of the chain corresponds to 1–43; that stretch reads MGRMDYLAMKTDDVDTVALVNSDMEELKVAAKKLFSDVSKLGG. Residues 44–64 form a helical membrane-spanning segment; the sequence is LGFGVSFLKFLASFAAIYLLI. The Cytoplasmic segment spans residues 65–74; it reads LDRTNWKTKM. A helical membrane pass occupies residues 75–95; that stretch reads LTSLLIPYIFLSLPSVIFNFL. Topologically, residues 96–98 are extracellular; sequence SGD. The chain crosses the membrane as a helical span at residues 99–119; that stretch reads VGKWIAFVAVVLRLFFPKHFP. Residue Asp-120 is a topological domain, cytoplasmic. A helical transmembrane segment spans residues 121 to 141; sequence WLEMPGSLILLLVVSPHFLAH. Over 142 to 144 the chain is Extracellular; that stretch reads HIR. Residues 145 to 165 traverse the membrane as a helical segment; sequence GTWIGTVISLFIGCYLLQEHI. At 166–179 the chain is on the cytoplasmic side; that stretch reads RASGGFRNSFTQPR. The chain crosses the membrane as a helical span at residues 180 to 200; the sequence is GVSNTLGIILLLVYPVWALIV. The Extracellular portion of the chain corresponds to 201–203; that stretch reads RVM.

Belongs to the Cold-regulated 413 protein family.

The protein localises to the cell membrane. The polypeptide is Cold-regulated 413 plasma membrane protein 2 (COR413PM2) (Arabidopsis thaliana (Mouse-ear cress)).